Consider the following 513-residue polypeptide: Bifunctional purine biosynthesis protein PurH (513 aa).

One can recognise an MGS-like domain in the interval 1–145 (MTKKAIISVY…KNFKYITVII (145 aa)).

This sequence belongs to the PurH family.

The catalysed reaction is (6R)-10-formyltetrahydrofolate + 5-amino-1-(5-phospho-beta-D-ribosyl)imidazole-4-carboxamide = 5-formamido-1-(5-phospho-D-ribosyl)imidazole-4-carboxamide + (6S)-5,6,7,8-tetrahydrofolate. It carries out the reaction IMP + H2O = 5-formamido-1-(5-phospho-D-ribosyl)imidazole-4-carboxamide. It functions in the pathway purine metabolism; IMP biosynthesis via de novo pathway; 5-formamido-1-(5-phospho-D-ribosyl)imidazole-4-carboxamide from 5-amino-1-(5-phospho-D-ribosyl)imidazole-4-carboxamide (10-formyl THF route): step 1/1. The protein operates within purine metabolism; IMP biosynthesis via de novo pathway; IMP from 5-formamido-1-(5-phospho-D-ribosyl)imidazole-4-carboxamide: step 1/1. In Caldicellulosiruptor saccharolyticus (strain ATCC 43494 / DSM 8903 / Tp8T 6331), this protein is Bifunctional purine biosynthesis protein PurH.